The chain runs to 284 residues: Tropomyosin (284 aa).

Disordered stretches follow at residues 1–27 (MDAI…QMEQ) and 99–131 (YERS…KVLE). Residues 1-273 (MDAIKKKMQA…KERYKAISDD (273 aa)) are a coiled coil. Residues 102-131 (SEEKLNSTTEKLEEASKAADESERNRKVLE) are compositionally biased toward basic and acidic residues.

The protein belongs to the tropomyosin family. In terms of assembly, homodimer.

Functionally, tropomyosin, in association with the troponin complex, plays a central role in the calcium dependent regulation of muscle contraction. This chain is Tropomyosin, found in Mimachlamys nobilis (Noble scallop).